Consider the following 562-residue polypeptide: Dihydroxy-acid dehydratase (562 aa).

Asp-80 serves as a coordination point for Mg(2+). A [2Fe-2S] cluster-binding site is contributed by Cys-121. Mg(2+)-binding residues include Asp-122 and Lys-123. The residue at position 123 (Lys-123) is an N6-carboxylysine. Cys-194 is a binding site for [2Fe-2S] cluster. Glu-446 is a Mg(2+) binding site. Ser-472 acts as the Proton acceptor in catalysis.

It belongs to the IlvD/Edd family. In terms of assembly, homodimer. Requires [2Fe-2S] cluster as cofactor. The cofactor is Mg(2+).

It catalyses the reaction (2R)-2,3-dihydroxy-3-methylbutanoate = 3-methyl-2-oxobutanoate + H2O. It carries out the reaction (2R,3R)-2,3-dihydroxy-3-methylpentanoate = (S)-3-methyl-2-oxopentanoate + H2O. It functions in the pathway amino-acid biosynthesis; L-isoleucine biosynthesis; L-isoleucine from 2-oxobutanoate: step 3/4. It participates in amino-acid biosynthesis; L-valine biosynthesis; L-valine from pyruvate: step 3/4. In terms of biological role, functions in the biosynthesis of branched-chain amino acids. Catalyzes the dehydration of (2R,3R)-2,3-dihydroxy-3-methylpentanoate (2,3-dihydroxy-3-methylvalerate) into 2-oxo-3-methylpentanoate (2-oxo-3-methylvalerate) and of (2R)-2,3-dihydroxy-3-methylbutanoate (2,3-dihydroxyisovalerate) into 2-oxo-3-methylbutanoate (2-oxoisovalerate), the penultimate precursor to L-isoleucine and L-valine, respectively. The sequence is that of Dihydroxy-acid dehydratase from Staphylococcus aureus (strain bovine RF122 / ET3-1).